We begin with the raw amino-acid sequence, 645 residues long: Translation factor GUF1 homolog, mitochondrial (645 aa).

Positions E40 to T215 constitute a tr-type G domain. Residues A49 to S56, D108 to H112, and N162 to D165 contribute to the GTP site.

This sequence belongs to the TRAFAC class translation factor GTPase superfamily. Classic translation factor GTPase family. LepA subfamily.

The protein resides in the mitochondrion inner membrane. The catalysed reaction is GTP + H2O = GDP + phosphate + H(+). Promotes mitochondrial protein synthesis. May act as a fidelity factor of the translation reaction, by catalyzing a one-codon backward translocation of tRNAs on improperly translocated ribosomes. Binds to mitochondrial ribosomes in a GTP-dependent manner. The sequence is that of Translation factor GUF1 homolog, mitochondrial from Caenorhabditis briggsae.